Here is a 115-residue protein sequence, read N- to C-terminus: Phosphorelay protein LuxU (115 aa).

An HPt domain is found at 17–107 (GADNVPVLLE…DRLHQTQQAY (91 aa)). Histidine 56 carries the phosphohistidine modification.

Monomer.

Phosphorelay protein which receives a sensory signal from a sensor kinase and transmit it to LuxO. At low cell density, a phosphoryl group is transferred from the sensor kinase, probably on His-56 and this phosphoryl group is further transferred to LuxO. This Vibrio vulnificus (strain CMCP6) protein is Phosphorelay protein LuxU (luxU).